Consider the following 204-residue polypeptide: Leucyl/phenylalanyl-tRNA--protein transferase (204 aa).

Belongs to the L/F-transferase family.

The protein resides in the cytoplasm. The catalysed reaction is N-terminal L-lysyl-[protein] + L-leucyl-tRNA(Leu) = N-terminal L-leucyl-L-lysyl-[protein] + tRNA(Leu) + H(+). It catalyses the reaction N-terminal L-arginyl-[protein] + L-leucyl-tRNA(Leu) = N-terminal L-leucyl-L-arginyl-[protein] + tRNA(Leu) + H(+). It carries out the reaction L-phenylalanyl-tRNA(Phe) + an N-terminal L-alpha-aminoacyl-[protein] = an N-terminal L-phenylalanyl-L-alpha-aminoacyl-[protein] + tRNA(Phe). Functions in the N-end rule pathway of protein degradation where it conjugates Leu, Phe and, less efficiently, Met from aminoacyl-tRNAs to the N-termini of proteins containing an N-terminal arginine or lysine. This chain is Leucyl/phenylalanyl-tRNA--protein transferase, found in Rhizobium etli (strain ATCC 51251 / DSM 11541 / JCM 21823 / NBRC 15573 / CFN 42).